Here is a 90-residue protein sequence, read N- to C-terminus: Small ribosomal subunit protein uS15c (90 aa).

It belongs to the universal ribosomal protein uS15 family. Part of the 30S ribosomal subunit.

Its subcellular location is the plastid. The protein localises to the chloroplast. The protein is Small ribosomal subunit protein uS15c (rps15) of Gossypium barbadense (Sea Island cotton).